The primary structure comprises 941 residues: Isoleucine--tRNA ligase (941 aa).

Positions 58–68 (PYANGNIHIGH) match the 'HIGH' region motif. E564 contributes to the L-isoleucyl-5'-AMP binding site. The 'KMSKS' region motif lies at 605–609 (KMSKS). ATP is bound at residue K608. Residues C904, C907, C924, and C927 each coordinate Zn(2+).

The protein belongs to the class-I aminoacyl-tRNA synthetase family. IleS type 1 subfamily. In terms of assembly, monomer. It depends on Zn(2+) as a cofactor.

It localises to the cytoplasm. The enzyme catalyses tRNA(Ile) + L-isoleucine + ATP = L-isoleucyl-tRNA(Ile) + AMP + diphosphate. In terms of biological role, catalyzes the attachment of isoleucine to tRNA(Ile). As IleRS can inadvertently accommodate and process structurally similar amino acids such as valine, to avoid such errors it has two additional distinct tRNA(Ile)-dependent editing activities. One activity is designated as 'pretransfer' editing and involves the hydrolysis of activated Val-AMP. The other activity is designated 'posttransfer' editing and involves deacylation of mischarged Val-tRNA(Ile). The chain is Isoleucine--tRNA ligase from Buchnera aphidicola subsp. Cinara cedri (strain Cc).